Consider the following 388-residue polypeptide: Succinate--CoA ligase [ADP-forming] subunit beta (388 aa).

An ATP-grasp domain is found at 9–244; it reads KQLFAEYGLP…PSQDDPREAH (236 aa). Residues lysine 46, 53–55, glutamate 99, threonine 102, and glutamate 107 each bind ATP; that span reads GRG. 2 residues coordinate Mg(2+): asparagine 199 and aspartate 213. Substrate-binding positions include asparagine 264 and 321–323; that span reads GIV.

It belongs to the succinate/malate CoA ligase beta subunit family. As to quaternary structure, heterotetramer of two alpha and two beta subunits. Requires Mg(2+) as cofactor.

The catalysed reaction is succinate + ATP + CoA = succinyl-CoA + ADP + phosphate. It carries out the reaction GTP + succinate + CoA = succinyl-CoA + GDP + phosphate. It functions in the pathway carbohydrate metabolism; tricarboxylic acid cycle; succinate from succinyl-CoA (ligase route): step 1/1. In terms of biological role, succinyl-CoA synthetase functions in the citric acid cycle (TCA), coupling the hydrolysis of succinyl-CoA to the synthesis of either ATP or GTP and thus represents the only step of substrate-level phosphorylation in the TCA. The beta subunit provides nucleotide specificity of the enzyme and binds the substrate succinate, while the binding sites for coenzyme A and phosphate are found in the alpha subunit. The sequence is that of Succinate--CoA ligase [ADP-forming] subunit beta from Stutzerimonas stutzeri (strain A1501) (Pseudomonas stutzeri).